We begin with the raw amino-acid sequence, 225 residues long: NAD(P)H-quinone oxidoreductase subunit K, chloroplastic (225 aa).

[4Fe-4S] cluster contacts are provided by cysteine 43, cysteine 44, cysteine 108, and cysteine 139.

The protein belongs to the complex I 20 kDa subunit family. In terms of assembly, NDH is composed of at least 16 different subunits, 5 of which are encoded in the nucleus. [4Fe-4S] cluster is required as a cofactor.

It is found in the plastid. The protein resides in the chloroplast thylakoid membrane. It carries out the reaction a plastoquinone + NADH + (n+1) H(+)(in) = a plastoquinol + NAD(+) + n H(+)(out). It catalyses the reaction a plastoquinone + NADPH + (n+1) H(+)(in) = a plastoquinol + NADP(+) + n H(+)(out). In terms of biological role, NDH shuttles electrons from NAD(P)H:plastoquinone, via FMN and iron-sulfur (Fe-S) centers, to quinones in the photosynthetic chain and possibly in a chloroplast respiratory chain. The immediate electron acceptor for the enzyme in this species is believed to be plastoquinone. Couples the redox reaction to proton translocation, and thus conserves the redox energy in a proton gradient. The sequence is that of NAD(P)H-quinone oxidoreductase subunit K, chloroplastic from Carica papaya (Papaya).